The following is a 302-amino-acid chain: Sulfate adenylyltransferase subunit 2 (302 aa).

Positions 280-302 (RQGRLIDSDQSASMEQKKRQGYF) are disordered.

Belongs to the PAPS reductase family. CysD subfamily. As to quaternary structure, heterodimer composed of CysD, the smaller subunit, and CysN.

The enzyme catalyses sulfate + ATP + H(+) = adenosine 5'-phosphosulfate + diphosphate. Its pathway is sulfur metabolism; hydrogen sulfide biosynthesis; sulfite from sulfate: step 1/3. With CysN forms the ATP sulfurylase (ATPS) that catalyzes the adenylation of sulfate producing adenosine 5'-phosphosulfate (APS) and diphosphate, the first enzymatic step in sulfur assimilation pathway. APS synthesis involves the formation of a high-energy phosphoric-sulfuric acid anhydride bond driven by GTP hydrolysis by CysN coupled to ATP hydrolysis by CysD. This is Sulfate adenylyltransferase subunit 2 from Shewanella baltica (strain OS223).